We begin with the raw amino-acid sequence, 494 residues long: UDP-N-acetylmuramate--L-alanine ligase (494 aa).

134–140 (GSHGKTT) provides a ligand contact to ATP.

The protein belongs to the MurCDEF family.

Its subcellular location is the cytoplasm. It carries out the reaction UDP-N-acetyl-alpha-D-muramate + L-alanine + ATP = UDP-N-acetyl-alpha-D-muramoyl-L-alanine + ADP + phosphate + H(+). It functions in the pathway cell wall biogenesis; peptidoglycan biosynthesis. In terms of biological role, cell wall formation. The sequence is that of UDP-N-acetylmuramate--L-alanine ligase from Prochlorococcus marinus (strain NATL1A).